We begin with the raw amino-acid sequence, 799 residues long: Rho GTPase-activating protein gacI (799 aa).

Positions 226 to 451 (IKLEEVFARE…LLVEHVLTIF (226 aa)) constitute a Rho-GAP domain. Polar residues predominate over residues 472-520 (RSQSDISSQTKPLPSLPTSPQNRSAIITGDSSSPSLNTPPVKSSLNSSD). Disordered regions lie at residues 472–572 (RSQS…PTSN) and 741–799 (EKQQ…LSNQ). Residues 525 to 549 (DNGSNNNNNNNTTNTITNNGIADTA) are compositionally biased toward low complexity. Over residues 550 to 568 (TPPPPTTPTAPTTPPPPTT) the composition is skewed to pro residues. Low complexity-rich tracts occupy residues 743–752 (QQQQQQQQTN) and 759–791 (ISSNTNTSISGDNSENGDSLNSSTSNQSPLNSS).

It is found in the cytoplasm. Rho GTPase-activating protein involved in the signal transduction pathway. The sequence is that of Rho GTPase-activating protein gacI (gacI) from Dictyostelium discoideum (Social amoeba).